The following is a 190-amino-acid chain: Peptide deformylase (190 aa).

Fe cation is bound by residues cysteine 94 and histidine 136. Glutamate 137 is a catalytic residue. Histidine 140 contacts Fe cation.

The protein belongs to the polypeptide deformylase family. It depends on Fe(2+) as a cofactor.

It carries out the reaction N-terminal N-formyl-L-methionyl-[peptide] + H2O = N-terminal L-methionyl-[peptide] + formate. Its function is as follows. Removes the formyl group from the N-terminal Met of newly synthesized proteins. Requires at least a dipeptide for an efficient rate of reaction. N-terminal L-methionine is a prerequisite for activity but the enzyme has broad specificity at other positions. This chain is Peptide deformylase, found in Chlorobium luteolum (strain DSM 273 / BCRC 81028 / 2530) (Pelodictyon luteolum).